The primary structure comprises 309 residues: GTP cyclohydrolase MptA (309 aa).

The protein belongs to the GTP cyclohydrolase IV family. Homodimer. The cofactor is Fe(2+).

It carries out the reaction GTP + H2O = 7,8-dihydroneopterin 2',3'-cyclic phosphate + formate + diphosphate + H(+). Its pathway is cofactor biosynthesis; 5,6,7,8-tetrahydromethanopterin biosynthesis. Its function is as follows. Converts GTP to 7,8-dihydro-D-neopterin 2',3'-cyclic phosphate, the first intermediate in the biosynthesis of coenzyme methanopterin. In Haloarcula marismortui (strain ATCC 43049 / DSM 3752 / JCM 8966 / VKM B-1809) (Halobacterium marismortui), this protein is GTP cyclohydrolase MptA.